A 635-amino-acid polypeptide reads, in one-letter code: MIICYSCLTVSILLTIKFVPCRFAGIEHQNTKSRVHFSLLDSRQENDTNHFEIAEAKFQKPHNEENTIGTITKFAPSVQEQHSSAVIPMPHFDQNRLEQALRIKGSIDGTEEALYRSLLDHTVYEKDVRPCIHHSQPTNVTFGFLLNQIVEMDERNQALTTRSWLNINWMDPRLSWNESLWSEIKAIYIPHARIWKPDIILVNNAIREYYASLVSTDVMVTSDGNVTWLFSALFRSSCPIRVRYYPFDDQQCDLKFASWSHDITEINLGLNTDKGDLSSYMNNSEFDLVDMTAVREVVTFPSDTNSDWPIIVIRIHMHRRPLFYVFNHIVPCVLISSMAVLGFLMPPETGEKINMIITTLLSMGVYLQSITESIPPTSEGVPLIGMYYVSSLLMVCLATCVNVITLNMHRNGAANQGRHVPAWMQKWILGYLATFMRMSIREPDSIALLKASQSKKSTIRRSSILRDLKRVKNMSNVRAKSKEQNANRECECMDPLVHIYAESIMSCLAADTKPMNGSTIREDFASESTFLGRVVSDGIMPRISASSNSVLTEFETRFRRILKRVYRSLQQHEIREEILDERSRIQWQWQQLASVVDRLLLCLFCTATLFTIICLLIVPVAYRDNDSMLSFLNFF.

The N-terminal stretch at 1–24 is a signal peptide; that stretch reads MIICYSCLTVSILLTIKFVPCRFA. Residues 25 to 324 lie on the Extracellular side of the membrane; the sequence is GIEHQNTKSR…IHMHRRPLFY (300 aa). Residues N46, N139, N177, and N225 are each glycosylated (N-linked (GlcNAc...) asparagine). A disulfide bridge links C238 with C252. N282 carries an N-linked (GlcNAc...) asparagine glycan. The next 3 helical transmembrane spans lie at 325–345, 355–375, and 381–401; these read VFNHIVPCVLISSMAVLGFLM, MIITTLLSMGVYLQSITESIP, and VPLIGMYYVSSLLMVCLATCV. Residues 402–599 lie on the Cytoplasmic side of the membrane; the sequence is NVITLNMHRN…QQLASVVDRL (198 aa). The helical transmembrane segment at 600–620 threads the bilayer; it reads LLCLFCTATLFTIICLLIVPV. N-linked (GlcNAc...) asparagine glycosylation occurs at N625.

The protein belongs to the ligand-gated ion channel (TC 1.A.9) family.

Its subcellular location is the postsynaptic cell membrane. It localises to the cell membrane. In terms of biological role, possible acetylcholine receptor. The protein is Ligand-gated ion channel 4 (lgc-4) of Caenorhabditis elegans.